The chain runs to 680 residues: Oligopeptidase A (680 aa).

H469 lines the Zn(2+) pocket. The active site involves E470. Positions 473 and 476 each coordinate Zn(2+).

It belongs to the peptidase M3 family. Zn(2+) serves as cofactor.

The catalysed reaction is Hydrolysis of oligopeptides, with broad specificity. Gly or Ala commonly occur as P1 or P1' residues, but more distant residues are also important, as is shown by the fact that Z-Gly-Pro-Gly-|-Gly-Pro-Ala is cleaved, but not Z-(Gly)(5).. Functionally, may play a specific role in the degradation of signal peptides after they are released from precursor forms of secreted proteins. Can cleave N-acetyl-L-Ala(4). This Salmonella typhimurium (strain LT2 / SGSC1412 / ATCC 700720) protein is Oligopeptidase A (prlC).